Consider the following 660-residue polypeptide: Glutenin, high molecular weight subunit 12 (660 aa).

An N-terminal signal peptide occupies residues 1-21 (MAKRLVLFAAVVIALVALTTA). Residues 127-136 (YYPSVTSPRQ) are compositionally biased toward polar residues. Positions 127-660 (YYPSVTSPRQ…EGGDALSASQ (534 aa)) are disordered. 4 stretches are compositionally biased toward low complexity: residues 141–166 (PGQA…QGQQ), 187–200 (QGYY…PGQG), 208–248 (QGYY…WQQG), and 255–275 (QQLG…GQQG). Residues 276–286 (HYPTSLQQPGQ) show a composition bias toward polar residues. Residues 296-365 (QQQPAQGQQG…QQQPGQGQQG (70 aa)) show a composition bias toward low complexity. Positions 370-384 (SLQQPGQQGHYPTSL) are enriched in polar residues. Low complexity-rich tracts occupy residues 385–426 (QQLG…GQQG), 478–514 (PGQR…PGQG), 522–535 (QGYY…PGQG), and 551–577 (QQTG…GQQG). Residues 590 to 604 (QQSGQGQQSGQGHQP) are compositionally biased toward gly residues.

This sequence belongs to the gliadin/glutenin family. As to quaternary structure, disulfide-bridge linked aggregates.

In terms of biological role, glutenins are high-molecular weight seed storage proteins of wheat endosperm. Thought to be responsible for the visco-elastic property of wheat dough. The sequence is that of Glutenin, high molecular weight subunit 12 from Triticum aestivum (Wheat).